The primary structure comprises 285 residues: Golgi phosphoprotein 3-like (285 aa).

The segment at Met-1 to Gly-39 is disordered. Residues Arg-10–Ser-23 are compositionally biased toward basic and acidic residues. A 1,2-diacyl-sn-glycero-3-phospho-(1D-myo-inositol 4-phosphate) contacts are provided by Trp-67 and Arg-76. Ser-112 carries the post-translational modification Phosphoserine. A 1,2-diacyl-sn-glycero-3-phospho-(1D-myo-inositol 4-phosphate) contacts are provided by Arg-157 and Arg-160. Residues Glu-176–Thr-187 form a beta-hairpin required for oligomerization region.

It belongs to the GOLPH3/VPS74 family. Homooligomer. Does not interact MYO18; differs from GOLPH3 by its inability to interact with MYO18. May interact with ARF1.

Its subcellular location is the golgi apparatus. It is found in the golgi stack membrane. The protein resides in the trans-Golgi network membrane. Phosphatidylinositol-4-phosphate-binding protein that may antagonize the action of GOLPH3 which is required for the process of vesicle budding at the Golgi and anterograde transport to the plasma membrane. The polypeptide is Golgi phosphoprotein 3-like (GOLPH3L) (Bos taurus (Bovine)).